A 432-amino-acid polypeptide reads, in one-letter code: Crenactin (432 aa).

Residues 20–24 (TSYVK), 182–184 (GGH), 235–239 (EVVKR), 354–358 (GAFSW), and Q399 contribute to the ATP site.

It belongs to the actin family. Monomer. The crenactin monomers polymerize into right-handed helical filaments, with 8 subunits per complete turn of the helix. Forms single-stranded filaments under high salt concentrations and double-stranded filaments under low salt concentrations. Interacts with arcadin-1 and arcadin-2.

Its subcellular location is the cytoplasm. It is found in the cytoskeleton. It carries out the reaction ATP + H2O = ADP + phosphate + H(+). Its activity is regulated as follows. Crenactin polymerization is inhibited by interaction with arcadin-2. Also significantly inhibited by elevated antibiotic A22 concentrations. Its function is as follows. Forms the backbone of an actin-like archaeal cytoskeleton, which is involved in cell shape determination. Has ATPase activity. Shows highest activity towards ATP or GTP as nucleotide, and only residual activity on UTP, CTP and dNTPs. This is Crenactin from Pyrobaculum calidifontis (strain DSM 21063 / JCM 11548 / VA1).